The following is a 970-amino-acid chain: Sodium/calcium exchanger 1 (970 aa).

The signal sequence occupies residues 1 to 32 (MLRLSLSPTYSLGFHLLAMMTLLISHVDHITA). The Extracellular segment spans residues 33 to 71 (ETEMVEEGNETGECTGSYYCKKGVILPIWEPQDPSFGDK). N-linked (GlcNAc...) asparagine glycosylation occurs at asparagine 41. A helical membrane pass occupies residues 72 to 92 (IARATVYFVAMVYMFLGVSII). Residues 93–133 (ADRFMSSIEVITSQEKEITIKKPNGETTKTTVRIWNETVSN) are Cytoplasmic-facing. Residues 134-154 (LTLMALGSSAPEILLSVIEVC) form a helical membrane-spanning segment. Residues 138-178 (ALGSSAPEILLSVIEVCGHNFTAGDLGPSTIVGSAAFNMFI) form an Alpha-1 repeat. The Extracellular segment spans residues 155-167 (GHNFTAGDLGPST). The N-linked (GlcNAc...) asparagine glycan is linked to asparagine 157. A helical membrane pass occupies residues 168-188 (IVGSAAFNMFIIIALCVYVVP). The Cytoplasmic portion of the chain corresponds to 189–201 (DGETRKIKHLRVF). A helical transmembrane segment spans residues 202–222 (FVTAAWSIFAYTWLYIILSVI). Topologically, residues 223-228 (SPGVVE) are extracellular. Residues 229–249 (VWEGLLTFFFFPICVVFAWVA) form a helical membrane-spanning segment. The Cytoplasmic segment spans residues 250 to 797 (DRRLLFYKYV…FVPPTEYWNG (548 aa)). The tract at residues 251–270 (RRLLFYKYVYKRYRAGKQRG) is putative calmodulin-binding region. Phosphoserine occurs at positions 282 and 389. Calx-beta domains lie at 393–493 (VNTE…VHLS) and 524–624 (ATVT…LEIG). Ca(2+)-binding residues include glutamate 417, aspartate 453, aspartate 478, aspartate 479, isoleucine 481, glutamate 483, glutamate 486, aspartate 530, aspartate 531, aspartate 532, glutamate 548, aspartate 584, aspartate 610, glutamate 611, glutamate 612, and glutamate 715. Residues 798 to 818 (WACFIVSILMIGLLTAFIGDL) form a helical membrane-spanning segment. Residues 819–821 (ASH) lie on the Extracellular side of the membrane. A helical membrane pass occupies residues 822–842 (FGCTIGLKDSVTAVVFVALGT). One copy of the Alpha-2 repeat lies at 839–875 (ALGTSVPDTFASKVAATQDQYADASIGNVTGSNAVNV). Over 843 to 871 (SVPDTFASKVAATQDQYADASIGNVTGSN) the chain is Cytoplasmic. The chain crosses the membrane as a helical span at residues 872-892 (AVNVFLGIGVAWSIAAIYHAA). The Extracellular segment spans residues 893-903 (NGEQFKVSPGT). A helical membrane pass occupies residues 904–924 (LAFSVTLFTIFAFINVGVLLY). Over 925 to 941 (RRRPEIGGELGGPRTAK) the chain is Cytoplasmic. The chain crosses the membrane as a helical span at residues 942–962 (LLTSCLFVLLWLLYIFFSSLE). Residues 963–970 (AYCHIKGF) lie on the Extracellular side of the membrane.

The protein belongs to the Ca(2+):cation antiporter (CaCA) (TC 2.A.19) family. SLC8 subfamily.

The protein resides in the cell membrane. It catalyses the reaction Ca(2+)(in) + 3 Na(+)(out) = Ca(2+)(out) + 3 Na(+)(in). Activated by micromolar levels of Ca(2+). Functionally, mediates the exchange of one Ca(2+) ion against three to four Na(+) ions across the cell membrane, and thereby contributes to the regulation of cytoplasmic Ca(2+) levels and Ca(2+)-dependent cellular processes. Contributes to Ca(2+) transport during excitation-contraction coupling in muscle. In a first phase, voltage-gated channels mediate the rapid increase of cytoplasmic Ca(2+) levels due to release of Ca(2+) stores from the endoplasmic reticulum. SLC8A1 mediates the export of Ca(2+) from the cell during the next phase, so that cytoplasmic Ca(2+) levels rapidly return to baseline. Required for normal embryonic heart development and the onset of heart contractions. The sequence is that of Sodium/calcium exchanger 1 (SLC8A1) from Cavia porcellus (Guinea pig).